Here is a 91-residue protein sequence, read N- to C-terminus: Small ribosomal subunit protein bS16 (91 aa).

It belongs to the bacterial ribosomal protein bS16 family.

This Ligilactobacillus salivarius (strain UCC118) (Lactobacillus salivarius) protein is Small ribosomal subunit protein bS16.